Here is a 162-residue protein sequence, read N- to C-terminus: Putative 4-hydroxy-4-methyl-2-oxoglutarate aldolase (162 aa).

Substrate is bound by residues 75-78 (GDML) and R97. D98 lines the a divalent metal cation pocket.

The protein belongs to the class II aldolase/RraA-like family. Homotrimer. Requires a divalent metal cation as cofactor.

The catalysed reaction is 4-hydroxy-4-methyl-2-oxoglutarate = 2 pyruvate. The enzyme catalyses oxaloacetate + H(+) = pyruvate + CO2. Its function is as follows. Catalyzes the aldol cleavage of 4-hydroxy-4-methyl-2-oxoglutarate (HMG) into 2 molecules of pyruvate. Also contains a secondary oxaloacetate (OAA) decarboxylase activity due to the common pyruvate enolate transition state formed following C-C bond cleavage in the retro-aldol and decarboxylation reactions. The chain is Putative 4-hydroxy-4-methyl-2-oxoglutarate aldolase from Pseudomonas paraeruginosa (strain DSM 24068 / PA7) (Pseudomonas aeruginosa (strain PA7)).